The primary structure comprises 134 residues: Large-conductance mechanosensitive channel (134 aa).

2 helical membrane-spanning segments follow: residues 16 to 36 (VIDLAVAVVIGAAFGKIVTAL) and 81 to 101 (GDFLNTILQFIIIAFAIFIIV).

This sequence belongs to the MscL family. Homopentamer.

The protein localises to the cell inner membrane. Its function is as follows. Channel that opens in response to stretch forces in the membrane lipid bilayer. May participate in the regulation of osmotic pressure changes within the cell. This is Large-conductance mechanosensitive channel from Xylella fastidiosa (strain 9a5c).